The sequence spans 91 residues: Small ribosomal subunit protein uS19 (91 aa).

Residues 72 to 91 are disordered; that stretch reads GEFSPTRTYTGHGSEKGKKK.

It belongs to the universal ribosomal protein uS19 family.

Functionally, protein S19 forms a complex with S13 that binds strongly to the 16S ribosomal RNA. This is Small ribosomal subunit protein uS19 from Mycoplasma mobile (strain ATCC 43663 / 163K / NCTC 11711) (Mesomycoplasma mobile).